Here is a 64-residue protein sequence, read N- to C-terminus: Conotoxin Ts-011 (64 aa).

A signal peptide spans 1 to 22 (MHCLPVLVILLLLIASTPSVDA). Residues 23–52 (RPKTKDDVPPASFHGADDANRILQTLWNLR) constitute a propeptide that is removed on maturation. Ile63 is subject to Isoleucine amide.

The protein belongs to the conotoxin T superfamily. In terms of processing, contains 2 disulfide bonds that can be either 'C1-C3, C2-C4' or 'C1-C4, C2-C3', since these disulfide connectivities have been observed for conotoxins with cysteine framework V (for examples, see AC P0DQQ7 and AC P81755). In terms of tissue distribution, expressed by the venom duct.

The protein localises to the secreted. This Conus tessulatus (Tessellate cone) protein is Conotoxin Ts-011.